Here is a 189-residue protein sequence, read N- to C-terminus: UPF0301 protein PSEEN5058 (189 aa).

Belongs to the UPF0301 (AlgH) family.

In Pseudomonas entomophila (strain L48), this protein is UPF0301 protein PSEEN5058.